Consider the following 270-residue polypeptide: 2-C-methyl-D-erythritol 4-phosphate cytidylyltransferase (270 aa).

Residues 1-33 are disordered; the sequence is MSDESRPSPAETPATTFAETSAETSAAGRSPAR. A compositionally biased stretch (low complexity) spans 7–27; that stretch reads PSPAETPATTFAETSAETSAA.

Belongs to the IspD/TarI cytidylyltransferase family. IspD subfamily.

It carries out the reaction 2-C-methyl-D-erythritol 4-phosphate + CTP + H(+) = 4-CDP-2-C-methyl-D-erythritol + diphosphate. Its pathway is isoprenoid biosynthesis; isopentenyl diphosphate biosynthesis via DXP pathway; isopentenyl diphosphate from 1-deoxy-D-xylulose 5-phosphate: step 2/6. Functionally, catalyzes the formation of 4-diphosphocytidyl-2-C-methyl-D-erythritol from CTP and 2-C-methyl-D-erythritol 4-phosphate (MEP). In Streptomyces coelicolor (strain ATCC BAA-471 / A3(2) / M145), this protein is 2-C-methyl-D-erythritol 4-phosphate cytidylyltransferase.